The sequence spans 576 residues: Calmodulin-binding protein 60 B (576 aa).

The tract at residues 1-25 (MMLPTKRPAPDHGDDERNEVMVPEP) is disordered. Residues 1 to 80 (MMLPTKRPAP…HPSSRPSLNR (80 aa)) are calmodulin-binding. The segment covering 8–25 (PAPDHGDDERNEVMVPEP) has biased composition (basic and acidic residues). A DNA-binding region spans residues 150 to 273 (DERQDWTENE…AFHKRLAYKN (124 aa)).

It belongs to the plant ACBP60 protein family. In terms of assembly, (Microbial infection) Interacts with V.dahliae SCP41. As to quaternary structure, interacts with calmodulin (CaM).

The protein resides in the nucleus. Its function is as follows. Transcription activator that binds DNA in a sequence-specific manner, likely 5'-GAAATTTTGG-3', to promote the expression of target genes. Required for pathogen resistance. This Gossypium hirsutum (Upland cotton) protein is Calmodulin-binding protein 60 B.